The following is a 386-amino-acid chain: Lycopene beta-cyclase (386 aa).

3 to 33 (DLILVGGGLANGLIAWRLRQRYPQLNLLLIE) is an NAD(+) binding site.

The protein belongs to the lycopene cyclase family. FAD is required as a cofactor.

It catalyses the reaction a carotenoid psi-end group = a carotenoid beta-end derivative. The catalysed reaction is all-trans-lycopene = gamma-carotene. The enzyme catalyses gamma-carotene = all-trans-beta-carotene. It functions in the pathway carotenoid biosynthesis; beta-carotene biosynthesis. In terms of biological role, catalyzes the double cyclization reaction which converts lycopene to beta-carotene. The polypeptide is Lycopene beta-cyclase (Pseudescherichia vulneris (Escherichia vulneris)).